A 382-amino-acid polypeptide reads, in one-letter code: 3-hydroxyisobutyryl-CoA hydrolase, mitochondrial (382 aa).

Substrate is bound by residues Glu-117, Gly-142, Glu-165, and Asp-173.

This sequence belongs to the enoyl-CoA hydratase/isomerase family.

It localises to the mitochondrion. It catalyses the reaction 3-hydroxy-2-methylpropanoyl-CoA + H2O = 3-hydroxy-2-methylpropanoate + CoA + H(+). It participates in amino-acid degradation; L-valine degradation. Its function is as follows. Hydrolyzes 3-hydroxyisobutyryl-CoA (HIBYL-CoA), a saline catabolite. Has high activity toward isobutyryl-CoA. Could be an isobutyryl-CoA dehydrogenase that functions in valine catabolism. Also hydrolyzes 3-hydroxypropanoyl-CoA. This chain is 3-hydroxyisobutyryl-CoA hydrolase, mitochondrial (hibch), found in Danio rerio (Zebrafish).